A 36-amino-acid polypeptide reads, in one-letter code: Pancreatic polypeptide (36 aa).

Tyrosine amide is present on Y36.

Belongs to the NPY family.

The protein localises to the secreted. Hormone secreted by pancreatic cells that acts as a regulator of pancreatic and gastrointestinal functions. The protein is Pancreatic polypeptide (PPY) of Larus argentatus (Herring gull).